A 302-amino-acid polypeptide reads, in one-letter code: UDP-N-acetylenolpyruvoylglucosamine reductase (302 aa).

The FAD-binding PCMH-type domain maps to 29 to 192; the sequence is KVGGPVDLLA…VAVTLQLSED (164 aa). Arg-172 is a catalytic residue. Ser-221 acts as the Proton donor in catalysis. Glu-291 is a catalytic residue.

The protein belongs to the MurB family. Requires FAD as cofactor.

It localises to the cytoplasm. It carries out the reaction UDP-N-acetyl-alpha-D-muramate + NADP(+) = UDP-N-acetyl-3-O-(1-carboxyvinyl)-alpha-D-glucosamine + NADPH + H(+). Its pathway is cell wall biogenesis; peptidoglycan biosynthesis. Functionally, cell wall formation. The chain is UDP-N-acetylenolpyruvoylglucosamine reductase from Trichlorobacter lovleyi (strain ATCC BAA-1151 / DSM 17278 / SZ) (Geobacter lovleyi).